Consider the following 270-residue polypeptide: Putative phosphoenolpyruvate synthase regulatory protein (270 aa).

150–157 is a binding site for ADP; the sequence is GVSRCGKT.

The protein belongs to the pyruvate, phosphate/water dikinase regulatory protein family. PSRP subfamily.

It carries out the reaction [pyruvate, water dikinase] + ADP = [pyruvate, water dikinase]-phosphate + AMP + H(+). It catalyses the reaction [pyruvate, water dikinase]-phosphate + phosphate + H(+) = [pyruvate, water dikinase] + diphosphate. Bifunctional serine/threonine kinase and phosphorylase involved in the regulation of the phosphoenolpyruvate synthase (PEPS) by catalyzing its phosphorylation/dephosphorylation. The sequence is that of Putative phosphoenolpyruvate synthase regulatory protein from Shewanella halifaxensis (strain HAW-EB4).